A 416-amino-acid chain; its full sequence is Nucleoside transporter 1 (416 aa).

Over residues 1-26 (MSISKESSKTMIDIEKKGGEGKDGKG) the composition is skewed to basic and acidic residues. The disordered stretch occupies residues 1–28 (MSISKESSKTMIDIEKKGGEGKDGKGGS). Residues 1–35 (MSISKESSKTMIDIEKKGGEGKDGKGGSKMTKNEQ) lie on the Cytoplasmic side of the membrane. A helical membrane pass occupies residues 36 to 58 (FLLPFTFILIGLSSLNVWNTALG). Residues 59 to 64 (LNINFK) lie on the Extracellular side of the membrane. Residues 65 to 83 (YNTFQITGLVCSSIIALFV) traverse the membrane as a helical segment. The Cytoplasmic segment spans residues 84–87 (KVPK). The chain crosses the membrane as a helical span at residues 88 to 107 (MLLPFALGGLAMLCAGFQIA). The Extracellular segment spans residues 108-119 (HQCFTFEQFDTY). The helical transmembrane segment at 120–139 (CLIAFIVIGIMAGLAQTIAF) threads the bilayer. Topologically, residues 140–148 (SVGTTMEEN) are cytoplasmic. Residues 149–171 (MGGYMSAGIGISGVFIFIINLLL) form a helical membrane-spanning segment. At 172–187 (DQIVPDQKKFNVNEAK) the chain is on the extracellular side. The chain crosses the membrane as a helical span at residues 188-210 (LLYLFLICELCLVLAIIFSVCNL). The Cytoplasmic segment spans residues 211–241 (ELSSSKTSKEEEYSDKEQGLSYLELLKDSYK). The helical transmembrane segment at 242-261 (AILAMFLVNWLSLQLFPGVG) threads the bilayer. The Extracellular segment spans residues 262–273 (HKKWQESHNISD). A helical membrane pass occupies residues 274 to 292 (YNVTLIVGMFQVFDFVSRY). Topologically, residues 293–311 (PPNLSHMKIFKWFTFSLNK) are cytoplasmic. A helical transmembrane segment spans residues 312-331 (LLLLNFLRLLFIPWFVINAA). Residues 332–343 (CDLPIFTNIVQQ) are Extracellular-facing. A helical transmembrane segment spans residues 344–366 (CVCMAMLAFTNGWFNTVPFLVFV). At 367–380 (QELKKAKKKKDIET) the chain is on the cytoplasmic side. A helical membrane pass occupies residues 381–403 (ISTFLVVAMFVGLFMGIWTTYIY). Residues 404–416 (DFFPIVIKRYVVP) are Extracellular-facing.

The protein belongs to the SLC29A/ENT transporter (TC 2.A.57) family.

It is found in the cell membrane. It catalyses the reaction inosine(in) = inosine(out). The catalysed reaction is adenosine(in) = adenosine(out). The enzyme catalyses hypoxanthine(out) = hypoxanthine(in). It carries out the reaction guanosine(in) = guanosine(out). It catalyses the reaction guanine(out) = guanine(in). The catalysed reaction is thymidine(in) = thymidine(out). The enzyme catalyses uridine(out) = uridine(in). It carries out the reaction uracil(in) = uracil(out). It catalyses the reaction thymine(out) = thymine(in). The catalysed reaction is adenine(out) = adenine(in). The enzyme catalyses cytosine(out) = cytosine(in). It carries out the reaction xanthine(out) = xanthine(in). Its function is as follows. Nucleoside and nucleobase transporter with a broad substrate specificity. This chain is Nucleoside transporter 1, found in Plasmodium vivax (strain Salvador I).